Reading from the N-terminus, the 83-residue chain is Mu-theraphotoxin-Hhn2e (83 aa).

The N-terminal stretch at 1-21 is a signal peptide; sequence MKASMFLALAGLVLLFVVGYA. The propeptide occupies 22-48; sequence SESEEKEFPRELLSKIFAVDDFKGEER. Disulfide bonds link C50–C65, C57–C70, and C64–C77. Residue L81 is modified to Leucine amide.

It belongs to the neurotoxin 10 (Hwtx-1) family. 15 (Hntx-3) subfamily. Monomer. In terms of tissue distribution, expressed by the venom gland.

The protein localises to the secreted. Lethal neurotoxin. Selectively blocks tetrodotoxin-sensitive voltage-gated sodium channels (Nav). Does not affect tetrodotoxin-resistant voltage-gated sodium channels or calcium channels. In Cyriopagopus hainanus (Chinese bird spider), this protein is Mu-theraphotoxin-Hhn2e.